Reading from the N-terminus, the 349-residue chain is Ribonucleoside-diphosphate reductase small chain (349 aa).

Fe cation is bound by residues D99, E130, and H133. Residue Y137 is part of the active site. Positions 192, 226, and 229 each coordinate Fe cation.

This sequence belongs to the ribonucleoside diphosphate reductase small chain family. As to quaternary structure, heterodimer of a large and a small subunit. Requires Fe cation as cofactor.

The enzyme catalyses a 2'-deoxyribonucleoside 5'-diphosphate + [thioredoxin]-disulfide + H2O = a ribonucleoside 5'-diphosphate + [thioredoxin]-dithiol. Functionally, provides the precursors necessary for DNA synthesis. Catalyzes the biosynthesis of deoxyribonucleotides from the corresponding ribonucleotides. In Plasmodium falciparum (isolate Dd2), this protein is Ribonucleoside-diphosphate reductase small chain (RNR2).